Reading from the N-terminus, the 512-residue chain is Chlorogenic acid esterase (512 aa).

The signal sequence occupies residues methionine 1–alanine 18. N-linked (GlcNAc...) asparagine glycosylation is found at asparagine 47, asparagine 80, and asparagine 98. Cysteine 92 and cysteine 120 form a disulfide bridge. Serine 230 functions as the Acyl-ester intermediate in the catalytic mechanism. N-linked (GlcNAc...) asparagine glycosylation is present at asparagine 271. Cysteine 281 and cysteine 292 are oxidised to a cystine. 3 N-linked (GlcNAc...) asparagine glycosylation sites follow: asparagine 295, asparagine 322, and asparagine 328. The active-site Charge relay system is glutamate 351. N-linked (GlcNAc...) asparagine glycans are attached at residues asparagine 391 and asparagine 402. The active-site Charge relay system is the histidine 416. N-linked (GlcNAc...) asparagine glycosylation is present at asparagine 474.

It belongs to the type-B carboxylesterase/lipase family.

It localises to the secreted. The enzyme catalyses chlorogenate + H2O = L-quinate + (E)-caffeate + H(+). In terms of biological role, extracellular chlorogenic acid esterase that releases caffeic acid from chlorogenic acid (CGA) contained in natural substrates such as apple marc and coffee pulp. Shows no activity towards 5-O-p-coumaroyl quinic acid, another quinic ester derivative, and rosmarinic acid, another caffeic ester derivative. This Aspergillus niger protein is Chlorogenic acid esterase.